A 250-amino-acid chain; its full sequence is Acetylglutamate kinase (250 aa).

Substrate contacts are provided by residues glycine 41–glycine 42, arginine 63, and asparagine 156.

Belongs to the acetylglutamate kinase family. ArgB subfamily.

It is found in the cytoplasm. It carries out the reaction N-acetyl-L-glutamate + ATP = N-acetyl-L-glutamyl 5-phosphate + ADP. The protein operates within amino-acid biosynthesis; L-arginine biosynthesis; N(2)-acetyl-L-ornithine from L-glutamate: step 2/4. Catalyzes the ATP-dependent phosphorylation of N-acetyl-L-glutamate. In Listeria welshimeri serovar 6b (strain ATCC 35897 / DSM 20650 / CCUG 15529 / CIP 8149 / NCTC 11857 / SLCC 5334 / V8), this protein is Acetylglutamate kinase.